A 38-amino-acid polypeptide reads, in one-letter code: Photosystem II reaction center protein X (38 aa).

The helical transmembrane segment at 9–29 (IASLFAGAFIALAIGGVLVFI) threads the bilayer.

Belongs to the PsbX family. Type 1 subfamily. PSII is composed of 1 copy each of membrane proteins PsbA, PsbB, PsbC, PsbD, PsbE, PsbF, PsbH, PsbI, PsbJ, PsbK, PsbL, PsbM, PsbT, PsbX, PsbY, PsbZ, Psb30/Ycf12, at least 3 peripheral proteins of the oxygen-evolving complex and a large number of cofactors. It forms dimeric complexes.

The protein resides in the plastid. It is found in the chloroplast thylakoid membrane. Its function is as follows. Involved in the binding and/or turnover of quinones at the Q(B) site of photosystem II (PSII). PSII is a light-driven water plastoquinone oxidoreductase, using light energy to abstract electrons from H(2)O, generating a proton gradient subsequently used for ATP formation. This chain is Photosystem II reaction center protein X, found in Phaeodactylum tricornutum (strain CCAP 1055/1).